Reading from the N-terminus, the 1020-residue chain is Calcium-transporting ATPase 1 (1020 aa).

Met-1 carries the post-translational modification N-acetylmethionine. Topologically, residues 1-162 are stromal; it reads MESYLNENFG…NQFTESPSRG (162 aa). An interaction with calmodulin region spans residues 21–32; that stretch reads ALQRWRKLCWIV. Ser-46 carries the phosphoserine; by CPK modification. Residues 163 to 183 form a helical membrane-spanning segment; the sequence is FWLFVWEALQDTTLMILAACA. Topologically, residues 184 to 201 are lumenal; the sequence is FVSLIVGILMEGWPIGAH. A helical transmembrane segment spans residues 202 to 222; the sequence is DGLGIVASILLVVFVTATSDY. At 223 to 350 the chain is on the stromal side; it reads RQSLQFKDLD…DDETPLQVKL (128 aa). A helical membrane pass occupies residues 351–370; sequence NGVATIIGKIGLFFAVITFA. Residues 371–400 lie on the Lumenal side of the membrane; sequence VLVQGLANQKRLDNSHWIWTADELMAMLEY. Residues 401–418 traverse the membrane as a helical segment; it reads FAVAVTIVVVAVPEGLPL. The Stromal portion of the chain corresponds to 419-813; sequence AVTLSLAFAM…KWGRSVYINI (395 aa). Residue Asp-456 is the 4-aspartylphosphate intermediate of the active site. Residues Asp-758 and Asp-762 each coordinate Mg(2+). A helical transmembrane segment spans residues 814–832; it reads QKFVQFQLTVNVVALIVNF. The Lumenal portion of the chain corresponds to 833 to 843; sequence LSACLTGNAPL. A helical membrane pass occupies residues 844-864; it reads TAVQLLWVNMIMDTLGALALA. The Stromal portion of the chain corresponds to 865–884; sequence TEPPQDDLMKRSPVGRKGNF. Residues 885-907 form a helical membrane-spanning segment; it reads ISNVMWRNILGQSLYQLVIIWCL. Topologically, residues 908 to 919 are lumenal; that stretch reads QTKGKTMFGLDG. A helical transmembrane segment spans residues 920-941; the sequence is PDSDLTLNTLIFNIFVFCQVFN. Residues 942 to 959 are Stromal-facing; sequence EISSREMEKIDVFKGILK. Residues 960 to 981 traverse the membrane as a helical segment; sequence NYVFVAVLTCTVVFQVIIIELL. Over 982-991 the chain is Lumenal; sequence GTFADTTPLN. The chain crosses the membrane as a helical span at residues 992-1013; the sequence is LGQWLVSIILGFLGMPVAAALK. Residues 1014 to 1020 lie on the Stromal side of the membrane; the sequence is MIPVGSH.

This sequence belongs to the cation transport ATPase (P-type) (TC 3.A.3) family. Type IIB subfamily. As to expression, expressed at higher levels in roots than in leaves.

The protein resides in the plastid. Its subcellular location is the chloroplast inner membrane. It catalyses the reaction Ca(2+)(in) + ATP + H2O = Ca(2+)(out) + ADP + phosphate + H(+). With respect to regulation, activated by calmodulin. Its function is as follows. This magnesium-dependent enzyme catalyzes the hydrolysis of ATP coupled with the translocation of calcium from the cytosol out of the cell or into organelles. The sequence is that of Calcium-transporting ATPase 1 (ACA1) from Arabidopsis thaliana (Mouse-ear cress).